A 372-amino-acid polypeptide reads, in one-letter code: tRNA-specific 2-thiouridylase MnmA (372 aa).

ATP is bound by residues 7-14 (GLSGGVDS) and methionine 33. The interval 104 to 106 (NPD) is interaction with target base in tRNA. Cysteine 109 functions as the Nucleophile in the catalytic mechanism. Residues cysteine 109 and cysteine 202 are joined by a disulfide bond. An ATP-binding site is contributed by glycine 134. Residues 152-154 (KDQ) are interaction with tRNA. The active-site Cysteine persulfide intermediate is the cysteine 202. Residues 310–311 (RY) form an interaction with tRNA region.

Belongs to the MnmA/TRMU family.

It is found in the cytoplasm. It carries out the reaction S-sulfanyl-L-cysteinyl-[protein] + uridine(34) in tRNA + AH2 + ATP = 2-thiouridine(34) in tRNA + L-cysteinyl-[protein] + A + AMP + diphosphate + H(+). In terms of biological role, catalyzes the 2-thiolation of uridine at the wobble position (U34) of tRNA, leading to the formation of s(2)U34. The polypeptide is tRNA-specific 2-thiouridylase MnmA (Mesomycoplasma hyopneumoniae (strain 7448) (Mycoplasma hyopneumoniae)).